The primary structure comprises 339 residues: Uroporphyrinogen decarboxylase (339 aa).

Residues 21-25 (RQAGR), Phe40, Asp71, Tyr147, Ser202, and His315 contribute to the substrate site.

It belongs to the uroporphyrinogen decarboxylase family. In terms of assembly, homodimer.

The protein resides in the cytoplasm. It carries out the reaction uroporphyrinogen III + 4 H(+) = coproporphyrinogen III + 4 CO2. It functions in the pathway porphyrin-containing compound metabolism; protoporphyrin-IX biosynthesis; coproporphyrinogen-III from 5-aminolevulinate: step 4/4. Its function is as follows. Catalyzes the decarboxylation of four acetate groups of uroporphyrinogen-III to yield coproporphyrinogen-III. The chain is Uroporphyrinogen decarboxylase from Helicobacter pylori (strain J99 / ATCC 700824) (Campylobacter pylori J99).